The chain runs to 67 residues: Large ribosomal subunit protein bL32 (67 aa).

Positions Met-1–Gln-19 are enriched in basic residues. A disordered region spans residues Met-1–Trp-20.

The protein belongs to the bacterial ribosomal protein bL32 family.

This chain is Large ribosomal subunit protein bL32, found in Paenarthrobacter aurescens (strain TC1).